Consider the following 38-residue polypeptide: Large ribosomal subunit protein bL36A (38 aa).

It belongs to the bacterial ribosomal protein bL36 family.

The protein is Large ribosomal subunit protein bL36A of Pseudomonas aeruginosa (strain UCBPP-PA14).